Consider the following 253-residue polypeptide: LexA repressor (253 aa).

The H-T-H motif DNA-binding region spans 26–46 (FDEMKDALNLRSKSGIHRLIS). A disordered region spans residues 73 to 97 (MPAATGKPPLAESGPPPVTAPATDE). Catalysis depends on for autocatalytic cleavage activity residues Ser-174 and Lys-212.

Belongs to the peptidase S24 family. In terms of assembly, homodimer.

It catalyses the reaction Hydrolysis of Ala-|-Gly bond in repressor LexA.. Functionally, represses a number of genes involved in the response to DNA damage (SOS response), including recA and lexA. In the presence of single-stranded DNA, RecA interacts with LexA causing an autocatalytic cleavage which disrupts the DNA-binding part of LexA, leading to derepression of the SOS regulon and eventually DNA repair. In Gluconacetobacter diazotrophicus (strain ATCC 49037 / DSM 5601 / CCUG 37298 / CIP 103539 / LMG 7603 / PAl5), this protein is LexA repressor.